Consider the following 396-residue polypeptide: uncharacterized protein (396 aa).

At Lys219 the chain carries N6-(pyridoxal phosphate)lysine.

It belongs to the class-V pyridoxal-phosphate-dependent aminotransferase family. Requires pyridoxal 5'-phosphate as cofactor.

The protein localises to the cytoplasm. It is found in the nucleus. This is an uncharacterized protein from Schizosaccharomyces pombe (strain 972 / ATCC 24843) (Fission yeast).